Reading from the N-terminus, the 415-residue chain is L-cysteine:1D-myo-inositol 2-amino-2-deoxy-alpha-D-glucopyranoside ligase (415 aa).

Cys-47 provides a ligand contact to Zn(2+). Residues 47–50, Thr-62, and 85–87 each bind L-cysteinyl-5'-AMP; these read CGIT and NVT. The 'HIGH' region motif lies at 49–59; sequence ITPYDATHLGH. The short motif at 190–195 is the 'ERGGDP' region element; that stretch reads ERGGDP. An L-cysteinyl-5'-AMP-binding site is contributed by Trp-230. Residue Cys-234 participates in Zn(2+) binding. Residue 252–254 coordinates L-cysteinyl-5'-AMP; that stretch reads GSD. His-259 is a Zn(2+) binding site. Residue Ile-286 participates in L-cysteinyl-5'-AMP binding. The 'KMSKS' region signature appears at 292–296; it reads KMSKS.

Belongs to the class-I aminoacyl-tRNA synthetase family. MshC subfamily. As to quaternary structure, monomer. Zn(2+) serves as cofactor.

It carries out the reaction 1D-myo-inositol 2-amino-2-deoxy-alpha-D-glucopyranoside + L-cysteine + ATP = 1D-myo-inositol 2-(L-cysteinylamino)-2-deoxy-alpha-D-glucopyranoside + AMP + diphosphate + H(+). Its function is as follows. Catalyzes the ATP-dependent condensation of GlcN-Ins and L-cysteine to form L-Cys-GlcN-Ins. The chain is L-cysteine:1D-myo-inositol 2-amino-2-deoxy-alpha-D-glucopyranoside ligase (mshC) from Mycolicibacterium paratuberculosis (strain ATCC BAA-968 / K-10) (Mycobacterium paratuberculosis).